The following is a 498-amino-acid chain: Aspartyl/glutamyl-tRNA(Asn/Gln) amidotransferase subunit B (498 aa).

It belongs to the GatB/GatE family. GatB subfamily. Heterotrimer of A, B and C subunits.

It catalyses the reaction L-glutamyl-tRNA(Gln) + L-glutamine + ATP + H2O = L-glutaminyl-tRNA(Gln) + L-glutamate + ADP + phosphate + H(+). It carries out the reaction L-aspartyl-tRNA(Asn) + L-glutamine + ATP + H2O = L-asparaginyl-tRNA(Asn) + L-glutamate + ADP + phosphate + 2 H(+). In terms of biological role, allows the formation of correctly charged Asn-tRNA(Asn) or Gln-tRNA(Gln) through the transamidation of misacylated Asp-tRNA(Asn) or Glu-tRNA(Gln) in organisms which lack either or both of asparaginyl-tRNA or glutaminyl-tRNA synthetases. The reaction takes place in the presence of glutamine and ATP through an activated phospho-Asp-tRNA(Asn) or phospho-Glu-tRNA(Gln). The sequence is that of Aspartyl/glutamyl-tRNA(Asn/Gln) amidotransferase subunit B from Erythrobacter litoralis (strain HTCC2594).